The following is a 257-amino-acid chain: RLA class II histocompatibility antigen, DP beta chain (257 aa).

The signal sequence occupies residues 1 to 29 (MRPCRSLRTAALAVVLTVLLHPVALGRAT). Residues 30-120 (PGESEQNYLW…LFQGLPVLLQ (91 aa)) are beta-1. The Extracellular segment spans residues 30-224 (PGESEQNYLW…KAQSDSARSK (195 aa)). Disulfide bonds link Cys-45–Cys-105 and Cys-143–Cys-199. Residue Asn-49 is glycosylated (N-linked (GlcNAc...) asparagine). The segment at 121-214 (TQPRVSVSPS…SLDSPITVEW (94 aa)) is beta-2. Residues 123–211 (PRVSVSPSKK…EHPSLDSPIT (89 aa)) form the Ig-like C1-type domain. The segment at 215 to 224 (KAQSDSARSK) is connecting peptide. The helical transmembrane segment at 225-245 (MLAGVGGLVLGLVSLAVGVFM) threads the bilayer. The Cytoplasmic segment spans residues 246–257 (HRRSKKAQQGCR).

It belongs to the MHC class II family.

It is found in the membrane. The polypeptide is RLA class II histocompatibility antigen, DP beta chain (Oryctolagus cuniculus (Rabbit)).